A 160-amino-acid chain; its full sequence is Protein max (160 aa).

A compositionally biased stretch (acidic residues) spans 1–13 (MSDNDDIEVESDE). The segment at 1-40 (MSDNDDIEVESDEEQPRFQSAADKRAHHNALERKRRDHIK) is disordered. The residue at position 2 (Ser2) is an N-acetylserine. 2 positions are modified to phosphoserine: Ser2 and Ser11. The bHLH domain occupies 23–74 (DKRAHHNALERKRRDHIKDSFHSLRDSVPSLQGEKASRAQILDKATEYIQYM). The span at 29–40 (NALERKRRDHIK) shows a compositional bias: basic and acidic residues. Lys66 carries the N6-acetyllysine modification. The segment at 81–102 (HQQDIDDLKRQNALLEQQVRAL) is leucine-zipper. A disordered region spans residues 105–160 (ARSSAQLQTNYPSSDNSLYTNAKGGTISAFDGGSDSSSESEPEEPQNRKKLRMEAS). Ser107 bears the Phosphoserine mark. The segment covering 107 to 124 (SSAQLQTNYPSSDNSLYT) has biased composition (polar residues). N6-acetyllysine is present on residues Lys153 and Lys154.

The protein belongs to the MAX family. Efficient DNA binding requires dimerization with another bHLH protein. Binds DNA as a heterodimer with MYC or MAD. Part of the E2F6.com-1 complex in G0 phase composed of E2F6, MGA, MAX, TFDP1, CBX3, BAT8, EUHMTASE1, RING1, RNF2, MBLR, L3MBTL2 and YAF2. Component of some MLL1/MLL complex, at least composed of the core components KMT2A/MLL1, ASH2L, HCFC1/HCF1, WDR5 and RBBP5, as well as the facultative components BACC1, CHD8, E2F6, HSP70, INO80C, KANSL1, LAS1L, MAX, MCRS1, MGA, MYST1/MOF, PELP1, PHF20, PRP31, RING2, RUVB1/TIP49A, RUVB2/TIP49B, SENP3, TAF1, TAF4, TAF6, TAF7, TAF9 and TEX10. Interacts with SPAG9. The heterodimer MYC:MAX interacts with ABI1; the interaction may enhance MYC:MAX transcriptional activity. Post-translationally, phosphorylated.

It localises to the nucleus. The protein localises to the cell projection. Its subcellular location is the dendrite. In terms of biological role, transcription regulator. Forms a sequence-specific DNA-binding protein complex with MYC or MAD which recognizes the core sequence 5'-CAC[GA]TG-3'. The MYC:MAX complex is a transcriptional activator, whereas the MAD:MAX complex is a repressor. May repress transcription via the recruitment of a chromatin remodeling complex containing H3 'Lys-9' histone methyltransferase activity. Represses MYC transcriptional activity from E-box elements. This is Protein max from Rattus norvegicus (Rat).